The following is a 345-amino-acid chain: Protein RecA (345 aa).

Residue 68 to 75 coordinates ATP; it reads GVESSGKT.

This sequence belongs to the RecA family.

The protein resides in the cytoplasm. Its function is as follows. Can catalyze the hydrolysis of ATP in the presence of single-stranded DNA, the ATP-dependent uptake of single-stranded DNA by duplex DNA, and the ATP-dependent hybridization of homologous single-stranded DNAs. It interacts with LexA causing its activation and leading to its autocatalytic cleavage. This is Protein RecA from Aquifex aeolicus (strain VF5).